The sequence spans 161 residues: Protein-export protein SecB (161 aa).

It belongs to the SecB family. Homotetramer, a dimer of dimers. One homotetramer interacts with 1 SecA dimer.

The protein resides in the cytoplasm. Its function is as follows. One of the proteins required for the normal export of preproteins out of the cell cytoplasm. It is a molecular chaperone that binds to a subset of precursor proteins, maintaining them in a translocation-competent state. It also specifically binds to its receptor SecA. This Bradyrhizobium diazoefficiens (strain JCM 10833 / BCRC 13528 / IAM 13628 / NBRC 14792 / USDA 110) protein is Protein-export protein SecB.